The following is a 257-amino-acid chain: Transcription factor MYB3 (257 aa).

2 consecutive HTH myb-type domains span residues 9–61 and 62–116; these read KAHM…MNYL and RPDL…KRKL. 2 DNA-binding regions (H-T-H motif) span residues 37–61 and 89–112; these read WRSL…MNYL and WSLI…NTHI. Positions 189 to 193 match the Required for interaction with CPL1 motif; the sequence is LNLEL.

Interacts with CPL1. As to expression, expressed in roots, stems, leaves, flowers and siliques.

It is found in the nucleus. This Arabidopsis thaliana (Mouse-ear cress) protein is Transcription factor MYB3 (MYB3).